A 465-amino-acid polypeptide reads, in one-letter code: Cysteine--tRNA ligase (465 aa).

Cys30 provides a ligand contact to Zn(2+). Residues 32–42 carry the 'HIGH' region motif; sequence ITVYDYCHIGH. Positions 214, 239, and 243 each coordinate Zn(2+). The 'KMSKS' region signature appears at 271-275; sequence KMSKS. Lys274 contacts ATP.

It belongs to the class-I aminoacyl-tRNA synthetase family. Monomer. Zn(2+) is required as a cofactor.

Its subcellular location is the cytoplasm. It catalyses the reaction tRNA(Cys) + L-cysteine + ATP = L-cysteinyl-tRNA(Cys) + AMP + diphosphate. The polypeptide is Cysteine--tRNA ligase (Burkholderia mallei (strain NCTC 10229)).